A 337-amino-acid polypeptide reads, in one-letter code: MRVLGIETSCDETGIAIYDEEKGLMAHTLYSQVKLHADYGGVVPELASRDHVRKIIPLIREALKNADTRIEDLDGICYTKGPGLIGALLVGACVGRSLAFSWNLPAVGVHHMEGHLLAPMLEDEVPEFPFVALLVSGGHSMLVKVDGIGQYEVLGESIDDAAGEAFDKTAKLMGLDYPGGPRLAKLAASGQPANYKFPRPMTDRPGLDFSFSGLKTFVANTIAAEPDDEQTRANIARAFEEAVVDTLSIKCRRALEQTGYKRLVIAGGVSANVRLRAGLAELMEKLGGKVYYPRGEFCTDNGAMIAYAGLQRLKAGQLEDLAVKGQPRWPLDTLLPV.

His-111 and His-115 together coordinate Fe cation. Residues 134–138, Asp-167, Gly-180, and Asn-272 each bind substrate; that span reads LVSGG. Asp-300 serves as a coordination point for Fe cation.

It belongs to the KAE1 / TsaD family. It depends on Fe(2+) as a cofactor.

It localises to the cytoplasm. The catalysed reaction is L-threonylcarbamoyladenylate + adenosine(37) in tRNA = N(6)-L-threonylcarbamoyladenosine(37) in tRNA + AMP + H(+). In terms of biological role, required for the formation of a threonylcarbamoyl group on adenosine at position 37 (t(6)A37) in tRNAs that read codons beginning with adenine. Is involved in the transfer of the threonylcarbamoyl moiety of threonylcarbamoyl-AMP (TC-AMP) to the N6 group of A37, together with TsaE and TsaB. TsaD likely plays a direct catalytic role in this reaction. This is tRNA N6-adenosine threonylcarbamoyltransferase from Shewanella amazonensis (strain ATCC BAA-1098 / SB2B).